We begin with the raw amino-acid sequence, 427 residues long: Large ribosomal subunit protein uL4 (427 aa).

N-acetylalanine is present on alanine 2. Lysine 14 bears the N6-acetyllysine mark. Arginine 97 is subject to Omega-N-methylarginine. Residue lysine 106 is modified to N6-acetyllysine. Lysine 239 is covalently cross-linked (Glycyl lysine isopeptide (Lys-Gly) (interchain with G-Cter in SUMO2)). The residue at position 259 (lysine 259) is an N6-acetyllysine. At threonine 266 the chain carries Phosphothreonine. A phosphoserine mark is found at serine 290 and serine 295. Position 300 is a citrulline (arginine 300). Residue lysine 327 forms a Glycyl lysine isopeptide (Lys-Gly) (interchain with G-Cter in SUMO2) linkage. Residues lysine 333 and lysine 353 each carry the N6-acetyllysine modification. Lysine 364 is modified (N6-acetyllysine; alternate). Lysine 364 participates in a covalent cross-link: Glycyl lysine isopeptide (Lys-Gly) (interchain with G-Cter in SUMO1); alternate. The residue at position 365 (serine 365) is a Phosphoserine. Residues 369-427 (AAVAGKKPVVGKKGKKVAVGVKKQKKPLVGKKAAATKKPAPEKKSTEKKPTTEEKKPAA) form a disordered region. Basic residues predominate over residues 377–397 (VVGKKGKKVAVGVKKQKKPLV). Basic and acidic residues predominate over residues 407 to 427 (PAPEKKSTEKKPTTEEKKPAA).

The protein belongs to the universal ribosomal protein uL4 family. As to quaternary structure, component of the large ribosomal subunit. May bind IPO9 with low affinity. Interacts with RBM3. In terms of processing, citrullinated by PADI4.

It localises to the cytoplasm. Component of the large ribosomal subunit. The ribosome is a large ribonucleoprotein complex responsible for the synthesis of proteins in the cell. This Macaca fascicularis (Crab-eating macaque) protein is Large ribosomal subunit protein uL4 (RPL4).